Reading from the N-terminus, the 348-residue chain is MSLKEQLEHLQQKSLQDIQKVVDLDALNQIRVEVLGKKGPITEVLRGMRDLSNEERPKVGAFANEIKSDLAQAIEARKAELEAKKEAAQLAHETIDVTLPGQPVKKGTPHVLTQVIDDLEDLFIGMGYQVVAGFEVEDEKHNFEMLNMPADHPARDMQDTFYITKDTLMRTHMSPNEARDLESHDFANGPIKMISPGRVYRRDTDDATHSHQFYQMEGQVIDKNITMADLKGTLEYTIHHIFGEDRDLRFRPSYFPFTEPSVEVDISCFRCNGEGCSVCKQTGWIEVLGAGMTHPNVLKAGGVDPEVYGGFAFGLGIDRFAMLKYGVDDIRNFYLNDVRFLNQFTQEV.

Glu-259 contributes to the Mg(2+) binding site.

Belongs to the class-II aminoacyl-tRNA synthetase family. Phe-tRNA synthetase alpha subunit type 1 subfamily. Tetramer of two alpha and two beta subunits. Requires Mg(2+) as cofactor.

The protein resides in the cytoplasm. It carries out the reaction tRNA(Phe) + L-phenylalanine + ATP = L-phenylalanyl-tRNA(Phe) + AMP + diphosphate + H(+). In Latilactobacillus sakei subsp. sakei (strain 23K) (Lactobacillus sakei subsp. sakei), this protein is Phenylalanine--tRNA ligase alpha subunit.